A 132-amino-acid chain; its full sequence is Small ribosomal subunit protein uS8 (132 aa).

It belongs to the universal ribosomal protein uS8 family. Part of the 30S ribosomal subunit. Contacts proteins S5 and S12.

One of the primary rRNA binding proteins, it binds directly to 16S rRNA central domain where it helps coordinate assembly of the platform of the 30S subunit. This is Small ribosomal subunit protein uS8 from Bartonella quintana (strain Toulouse) (Rochalimaea quintana).